The chain runs to 122 residues: Small ribosomal subunit protein uS13 (122 aa).

The disordered stretch occupies residues 98–122; sequence VRGQRTHTNARTRKGPAKAIAGKKK.

The protein belongs to the universal ribosomal protein uS13 family. Part of the 30S ribosomal subunit. Forms a loose heterodimer with protein S19. Forms two bridges to the 50S subunit in the 70S ribosome.

Functionally, located at the top of the head of the 30S subunit, it contacts several helices of the 16S rRNA. In the 70S ribosome it contacts the 23S rRNA (bridge B1a) and protein L5 of the 50S subunit (bridge B1b), connecting the 2 subunits; these bridges are implicated in subunit movement. Contacts the tRNAs in the A and P-sites. The polypeptide is Small ribosomal subunit protein uS13 (Jannaschia sp. (strain CCS1)).